The primary structure comprises 116 residues: NADH-ubiquinone oxidoreductase chain 3 (116 aa).

3 helical membrane-spanning segments follow: residues 3-23, 56-76, and 85-105; these read LVIS…VVSF, FFLV…LLAL, and ATGT…GLIY.

Belongs to the complex I subunit 3 family.

Its subcellular location is the mitochondrion membrane. The catalysed reaction is a ubiquinone + NADH + 5 H(+)(in) = a ubiquinol + NAD(+) + 4 H(+)(out). Functionally, core subunit of the mitochondrial membrane respiratory chain NADH dehydrogenase (Complex I) that is believed to belong to the minimal assembly required for catalysis. Complex I functions in the transfer of electrons from NADH to the respiratory chain. The immediate electron acceptor for the enzyme is believed to be ubiquinone. The sequence is that of NADH-ubiquinone oxidoreductase chain 3 (MT-ND3) from Formosania lacustris (Oriental stream loach).